A 238-amino-acid polypeptide reads, in one-letter code: Formate dehydrogenase, cytochrome b556 subunit (238 aa).

Residues H23 and H62 each contribute to the heme b site. A run of 4 helical transmembrane segments spans residues 23-43 (HWMLVICFFMTMFTGVAFFFP), 60-80 (AIHPFTGILMFFAFIYLALLY), 120-140 (MLFWTLNLAMVTLLVTGIIMW), and 155-175 (IAILLHSASAFMLFTGILVHI). Heme b-binding residues include H160 and H174.

Belongs to the formate dehydrogenase gamma subunit family. As to quaternary structure, formate dehydrogenase is a membrane-bound complex, formed by subunits alpha, beta and gamma. Requires heme as cofactor.

It localises to the cell membrane. Functionally, allows to use formate as major electron donor during anaerobic respiration. Subunit gamma is probably the cytochrome b556(FDO) component of the formate dehydrogenase. This Haemophilus influenzae (strain ATCC 51907 / DSM 11121 / KW20 / Rd) protein is Formate dehydrogenase, cytochrome b556 subunit (fdxI).